The sequence spans 320 residues: GPI-specific phospholipase A2-like PGAP3 (320 aa).

Residues 1–23 form the signal peptide; that stretch reads MAKRTAPLLLLTLAVGLAGGSQG. Residues 24–98 lie on the Lumenal side of the membrane; the sequence is DREPVYRDCV…QFHGKWPFSR (75 aa). A glycan (N-linked (GlcNAc...) asparagine) is linked at Asn40. Residues 99–119 traverse the membrane as a helical segment; that stretch reads FLFIQEPASAVASLLNGLASL. Over 120-135 the chain is Cytoplasmic; sequence VMLCRYRASVPASSPM. Residues 136 to 156 form a helical membrane-spanning segment; the sequence is YHTCMAFAWVSLNAWFWSTVF. At 157-169 the chain is on the lumenal side; it reads HTRDTDLTEKMDY. The chain crosses the membrane as a helical span at residues 170 to 190; the sequence is FCASAVILHSVYLCCVRTVGL. The Cytoplasmic segment spans residues 191 to 198; it reads QHPSVASA. Residues 199-219 form a helical membrane-spanning segment; it reads FGALLLLLLTGHISYLSLVHF. Over 220-223 the chain is Lumenal; it reads DYGY. The chain crosses the membrane as a helical span at residues 224-244; that stretch reads NMMANVAIGLVNLAWWLVWCL. Residues 245–257 lie on the Cytoplasmic side of the membrane; that stretch reads RNRQRLPHTRRCM. A helical membrane pass occupies residues 258–278; it reads VVVVLLQGLSLLELLDFPPLF. A topological domain (lumenal) is located at residue Trp279. A helical membrane pass occupies residues 280–299; sequence VLDAHAIWHISTIPVHTLFF. At 300–320 the chain is on the cytoplasmic side; sequence RFLEDDSLYLLKESGAMFKLD.

It belongs to the PGAP3 family.

It is found in the golgi apparatus membrane. In terms of biological role, involved in the fatty acid remodeling steps of GPI-anchor maturation where the unsaturated acyl chain at sn-2 of inositol phosphate is replaced by a saturated stearoyl chain. May catalyze the first step of the fatty acid remodeling, by removing the unsaturated acyl chain at sn-2 of inositol phosphate, generating a lyso-GPI intermediate. The fatty acid remodeling steps is critical for the integration of GPI-APs into lipid rafts. The polypeptide is GPI-specific phospholipase A2-like PGAP3 (Mus musculus (Mouse)).